The following is a 799-amino-acid chain: Histidine biosynthesis trifunctional protein (799 aa).

The tract at residues 1–229 (MVLPILPLID…FIVEQENVGF (229 aa)) is phosphoribosyl-AMP cyclohydrolase. The tract at residues 230–312 (CHLETMSCFG…FYFALAKLVA (83 aa)) is phosphoribosyl-ATP pyrophosphohydrolase. The interval 313–799 (NDVSLKDVEN…KLGLIPKDFQ (487 aa)) is histidinol dehydrogenase. 2 residues coordinate Zn(2+): Q618 and H621. Catalysis depends on residues E687 and H688. 2 residues coordinate Zn(2+): D721 and H780.

In the C-terminal section; belongs to the histidinol dehydrogenase family. Zn(2+) is required as a cofactor.

The catalysed reaction is 1-(5-phospho-beta-D-ribosyl)-5'-AMP + H2O = 1-(5-phospho-beta-D-ribosyl)-5-[(5-phospho-beta-D-ribosylamino)methylideneamino]imidazole-4-carboxamide. The enzyme catalyses 1-(5-phospho-beta-D-ribosyl)-ATP + H2O = 1-(5-phospho-beta-D-ribosyl)-5'-AMP + diphosphate + H(+). It catalyses the reaction L-histidinol + 2 NAD(+) + H2O = L-histidine + 2 NADH + 3 H(+). It functions in the pathway amino-acid biosynthesis; L-histidine biosynthesis; L-histidine from 5-phospho-alpha-D-ribose 1-diphosphate: step 2/9. The protein operates within amino-acid biosynthesis; L-histidine biosynthesis; L-histidine from 5-phospho-alpha-D-ribose 1-diphosphate: step 3/9. Its pathway is amino-acid biosynthesis; L-histidine biosynthesis; L-histidine from 5-phospho-alpha-D-ribose 1-diphosphate: step 9/9. The sequence is that of Histidine biosynthesis trifunctional protein from Saccharomyces cerevisiae (strain ATCC 204508 / S288c) (Baker's yeast).